The primary structure comprises 460 residues: Light-independent protochlorophyllide reductase subunit N (460 aa).

Positions 22, 47, and 107 each coordinate [4Fe-4S] cluster.

Belongs to the BchN/ChlN family. In terms of assembly, protochlorophyllide reductase is composed of three subunits; ChlL, ChlN and ChlB. Forms a heterotetramer of two ChlB and two ChlN subunits. Requires [4Fe-4S] cluster as cofactor.

Its subcellular location is the plastid. The protein localises to the cyanelle. It carries out the reaction chlorophyllide a + oxidized 2[4Fe-4S]-[ferredoxin] + 2 ADP + 2 phosphate = protochlorophyllide a + reduced 2[4Fe-4S]-[ferredoxin] + 2 ATP + 2 H2O. The protein operates within porphyrin-containing compound metabolism; chlorophyll biosynthesis (light-independent). In terms of biological role, component of the dark-operative protochlorophyllide reductase (DPOR) that uses Mg-ATP and reduced ferredoxin to reduce ring D of protochlorophyllide (Pchlide) to form chlorophyllide a (Chlide). This reaction is light-independent. The NB-protein (ChlN-ChlB) is the catalytic component of the complex. The protein is Light-independent protochlorophyllide reductase subunit N of Cyanophora paradoxa.